A 199-amino-acid chain; its full sequence is Small ribosomal subunit protein uS5 (199 aa).

Positions 1–29 are disordered; it reads MATAGRRGGAASERRERRESRRQEASPEK. Positions 12–27 are enriched in basic and acidic residues; it reads SERRERRESRRQEASP. An S5 DRBM domain is found at 32–95; it reads FLERVVTINR…EEAKKHFFTV (64 aa).

The protein belongs to the universal ribosomal protein uS5 family. Part of the 30S ribosomal subunit. Contacts proteins S4 and S8.

In terms of biological role, with S4 and S12 plays an important role in translational accuracy. Located at the back of the 30S subunit body where it stabilizes the conformation of the head with respect to the body. This chain is Small ribosomal subunit protein uS5, found in Acidothermus cellulolyticus (strain ATCC 43068 / DSM 8971 / 11B).